The sequence spans 158 residues: MRCPFCGSDDTQVKDSRPAEDNSAIRRRRICPDCGGRFTTFERVQLRELTVLKKTGRKAPFDRNKLVRSFEIALRKRPVDRDRIERAVSGIVRRLESSGETEISSEQIGLQVLEALKSLDDVAFVRYASVYRDFSHAEDFEQVISEITAKISQDHEPG.

Positions 1 to 22 (MRCPFCGSDDTQVKDSRPAEDN) are disordered. A zinc finger lies at 3–34 (CPFCGSDDTQVKDSRPAEDNSAIRRRRICPDC). A compositionally biased stretch (basic and acidic residues) spans 11-22 (TQVKDSRPAEDN). The 91-residue stretch at 49-139 (LTVLKKTGRK…VYRDFSHAED (91 aa)) folds into the ATP-cone domain.

This sequence belongs to the NrdR family. Zn(2+) is required as a cofactor.

In terms of biological role, negatively regulates transcription of bacterial ribonucleotide reductase nrd genes and operons by binding to NrdR-boxes. The sequence is that of Transcriptional repressor NrdR from Allorhizobium ampelinum (strain ATCC BAA-846 / DSM 112012 / S4) (Agrobacterium vitis (strain S4)).